A 1557-amino-acid polypeptide reads, in one-letter code: Ras guanine nucleotide exchange factor K (1557 aa).

Positions Met1–Pro16 are enriched in pro residues. Disordered stretches follow at residues Met1 to Val121, Val146 to Val181, Leu195 to Leu238, Ser283 to Pro347, Asn558 to Ser619, and Thr881 to His937. Low complexity-rich tracts occupy residues Ser17–Asn40, Ser52–Ser63, Asn73–Val90, Ile102–Ser114, Thr148–Thr161, Leu195–Ser207, and Pro222–Pro236. The segment covering Ser283–Gln310 has biased composition (pro residues). Coiled-coil stretches lie at residues Gln310–Thr338 and Asn591–Leu629. Low complexity predominate over residues Gln311 to Asn333. Positions Glu334–Gly343 are enriched in polar residues. Composition is skewed to low complexity over residues Asn558–Asn610 and Thr881–Thr928. The 120-residue stretch at Leu1058–Thr1177 folds into the N-terminal Ras-GEF domain. The tract at residues Pro1254 to Thr1303 is disordered. A compositionally biased stretch (low complexity) spans Pro1261–Ser1291. The 234-residue stretch at Asp1316–Arg1549 folds into the Ras-GEF domain.

Functionally, promotes the exchange of Ras-bound GDP by GTP. This Dictyostelium discoideum (Social amoeba) protein is Ras guanine nucleotide exchange factor K (gefK).